A 396-amino-acid polypeptide reads, in one-letter code: Adenylyltransferase and sulfurtransferase UBA4 (396 aa).

ATP is bound by residues Gly51, Asp72, 79 to 83, Lys95, and 139 to 140; these read SNLHR and DG. Positions 180 and 183 each coordinate Zn(2+). The Glycyl thioester intermediate; for adenylyltransferase activity role is filled by Cys197. Cys257 and Cys260 together coordinate Zn(2+). The region spanning 305 to 394 is the Rhodanese domain; it reads VSTKHILLDV…WAKNVDEKFP (90 aa). Residue Cys355 is the Cysteine persulfide intermediate; for sulfurtransferase activity of the active site.

This sequence in the N-terminal section; belongs to the HesA/MoeB/ThiF family. UBA4 subfamily. Zn(2+) serves as cofactor.

The protein localises to the cytoplasm. It localises to the cytosol. It participates in tRNA modification; 5-methoxycarbonylmethyl-2-thiouridine-tRNA biosynthesis. In terms of biological role, plays a central role in 2-thiolation of mcm(5)S(2)U at tRNA wobble positions of cytosolic tRNA(Lys), tRNA(Glu) and tRNA(Gln). Acts by mediating the C-terminal thiocarboxylation of sulfur carrier URM1. Its N-terminus first activates URM1 as acyl-adenylate (-COAMP), then the persulfide sulfur on the catalytic cysteine is transferred to URM1 to form thiocarboxylation (-COSH) of its C-terminus. The reaction probably involves hydrogen sulfide that is generated from the persulfide intermediate and that acts as a nucleophile towards URM1. Subsequently, a transient disulfide bond is formed. Does not use thiosulfate as sulfur donor; NFS1 probably acting as a sulfur donor for thiocarboxylation reactions. Prior mcm(5) tRNA modification by the elongator complex is required for 2-thiolation. May also be involved in protein urmylation. This is Adenylyltransferase and sulfurtransferase UBA4 from Yarrowia lipolytica (strain CLIB 122 / E 150) (Yeast).